A 111-amino-acid chain; its full sequence is Fertilization-influencing membrane protein (111 aa).

The signal sequence occupies residues 1–23 (MKLWLWVAVGVWMLMAELGTIET). The chain crosses the membrane as a helical span at residues 85-105 (ILVGTLVVAFFFLLFQFCLHV).

In terms of tissue distribution, testis-specific.

The protein localises to the cell membrane. It localises to the secreted. Its function is as follows. Plays a role in sperm-oocyte fusion process during fertilization. The sequence is that of Fertilization-influencing membrane protein from Mus musculus (Mouse).